The primary structure comprises 248 residues: MEMPIIKLKNFDGPFDLLLHLIKKNEMSITEIKIHEITKQYLEYIALMKELDLEITSEFIVMAATLIEIKSKSLLPKVKVEDETCEEDLQKILMEKLQEYKKFKKISAYLRERELSTGEVFTKKAEIIEVEVDNKLDDDYFKNITMLDLYKLYNNLMRIYGEKQNVNVMEKKISVDKYKITDKINFLRDKLSEKSIVRFSEFIPQCECKLEVVVTFMAMLELIKRSEIKVVQYENFGEIMMEKVIVNE.

It belongs to the ScpA family. In terms of assembly, component of a cohesin-like complex composed of ScpA, ScpB and the Smc homodimer, in which ScpA and ScpB bind to the head domain of Smc. The presence of the three proteins is required for the association of the complex with DNA.

It is found in the cytoplasm. In terms of biological role, participates in chromosomal partition during cell division. May act via the formation of a condensin-like complex containing Smc and ScpB that pull DNA away from mid-cell into both cell halves. The chain is Segregation and condensation protein A from Clostridium perfringens (strain ATCC 13124 / DSM 756 / JCM 1290 / NCIMB 6125 / NCTC 8237 / Type A).